Reading from the N-terminus, the 255-residue chain is MSSSTGKVIIKLPKTSIPYKYVEPVLIEVDKLVNHEELVDARLRELMDKIRSENAVDMPIVVTPIPGTDKYLIVDGHHRWAAVKALGYRKIPCIIIDYFSQDVKLKTWLPGIIGDVKPVLEEAARRGLGVAECRYSVDTSGDIDAKLLEESSFIVLGRDLCRAISGGVEGQKIVSQVLNELNMKGLFTLVYYGELSEALEDLKSGWLHYLFIRKSLTKEDVMRYVRNGGVYAPKTTRHILPFYPAKTYTPLDALR.

Residue Glu36 is part of the active site. O-phospho-L-serine is bound at residue Val74. Position 75 (Asp75) interacts with Mg(2+). O-phospho-L-serine contacts are provided by Gly76, His77, His78, Trp108, Lys234, Thr236, and His238.

This sequence belongs to the SerK family. Requires Mg(2+) as cofactor.

It carries out the reaction L-serine + ATP = O-phospho-L-serine + ADP + H(+). In terms of biological role, free serine kinase that uses ATP to phosphorylate L-serine to yield O-phospho-L-serine and ADP. The chain is ATP-dependent L-serine kinase from Desulfurococcus mucosus (strain ATCC 35584 / DSM 2162 / JCM 9187 / O7/1).